A 205-amino-acid polypeptide reads, in one-letter code: Ribosomal RNA small subunit methyltransferase G (205 aa).

Residues Gly-66, Phe-71, Ile-119–Glu-120, and Arg-135 each bind S-adenosyl-L-methionine.

Belongs to the methyltransferase superfamily. RNA methyltransferase RsmG family.

It localises to the cytoplasm. It catalyses the reaction guanosine(527) in 16S rRNA + S-adenosyl-L-methionine = N(7)-methylguanosine(527) in 16S rRNA + S-adenosyl-L-homocysteine. Specifically methylates the N7 position of guanine in position 527 of 16S rRNA. This is Ribosomal RNA small subunit methyltransferase G from Rhizobium johnstonii (strain DSM 114642 / LMG 32736 / 3841) (Rhizobium leguminosarum bv. viciae).